We begin with the raw amino-acid sequence, 441 residues long: BTB/POZ domain-containing protein At3g05675 (441 aa).

In terms of domain architecture, BTB spans 20–98 (SDIVVRLRNE…LYVVSDDVHE (79 aa)).

The protein operates within protein modification; protein ubiquitination. Functionally, may act as a substrate-specific adapter of an E3 ubiquitin-protein ligase complex (CUL3-RBX1-BTB) which mediates the ubiquitination and subsequent proteasomal degradation of target proteins. The sequence is that of BTB/POZ domain-containing protein At3g05675 from Arabidopsis thaliana (Mouse-ear cress).